Reading from the N-terminus, the 239-residue chain is tRNA (guanine-N(7)-)-methyltransferase (239 aa).

S-adenosyl-L-methionine is bound by residues Glu-68, Glu-93, Asp-120, and Asp-143. The active site involves Asp-143. Substrate contacts are provided by residues Lys-147, Asp-180, and 217 to 220 (TKFE).

The protein belongs to the class I-like SAM-binding methyltransferase superfamily. TrmB family.

The enzyme catalyses guanosine(46) in tRNA + S-adenosyl-L-methionine = N(7)-methylguanosine(46) in tRNA + S-adenosyl-L-homocysteine. It functions in the pathway tRNA modification; N(7)-methylguanine-tRNA biosynthesis. In terms of biological role, catalyzes the formation of N(7)-methylguanine at position 46 (m7G46) in tRNA. The polypeptide is tRNA (guanine-N(7)-)-methyltransferase (Vibrio cholerae serotype O1 (strain ATCC 39315 / El Tor Inaba N16961)).